The sequence spans 70 residues: Putative membrane protein insertion efficiency factor (70 aa).

This sequence belongs to the UPF0161 family.

The protein resides in the cell membrane. In terms of biological role, could be involved in insertion of integral membrane proteins into the membrane. The sequence is that of Putative membrane protein insertion efficiency factor from Clostridium novyi (strain NT).